The following is a 677-amino-acid chain: MTASPDYLVVLFGITAGATGAKLGSDEKELILLLWKVVDLANKKVGQLHEVLVRPDQLELTEDCKEETKIDAENLSSAPQLDQALRQFNQSVSNELNIGVGTSFCLCTDGQLHVRQILHPEASKKNVLLPECFYSFFDLRKEFKKCCPGSPDLDKLDVAAMAESLNFEKNDSMSRYGASQVEDMGNIILAMISEPYNHRFSDPERVNYKFESGTCSKTELIDGNTVVRARGLPWQSSDQDIARFFKGLNIAKGGAALCLNAQGRRNGEALVRFVSEEHRDLALQRHKHHMGTRYIEVYKATGEDFLKIAGGTSNEVAQFLSKENQVIVRMRGLPFTATAEEVVAFFGQHCPITGGKEGILFVTYPDGRPTGDAFVLFACEEYAQNALRKHKDLLGKRYIELFRSTAAEVQQVLNRFSSAPLIPLPTAPIIPVLPQQFVPPTNVRDCVRLRGLPYAATIEDILDFLGEFSTDIRTHGVHMVLNHQGRPSGDAFIQMKSTDRAFMAAQKYHKKTMKDRYVEVFQCSAEEMNFVLMGGTLNRNGLSPPPCLSPPSYTFPAPAAVIPTEAAIYQPSLLLNPRALQPSTAYYPAGTQLFMNYTAYYPSPPGSPNSLGYFPTAANLSSVPPQPGTVVRMQGLAYNTGVKEILNFFQGYQYATEDGLVHANDQARTVPKEWVCI.

3 RRM domains span residues 225–302 (TVVR…KATG), 326–406 (VIVR…RSTA), and 445–525 (DCVR…QCSA). The residue at position 543 (Ser-543) is a Phosphoserine. At Arg-578 the chain carries Omega-N-methylarginine.

It belongs to the ESRP family.

It localises to the nucleus. Functionally, mRNA splicing factor that regulates the formation of epithelial cell-specific isoforms. Specifically regulates the expression of FGFR2-IIIb, an epithelial cell-specific isoform of FGFR2. Also regulates the splicing of CD44, CTNND1, ENAH, 3 transcripts that undergo changes in splicing during the epithelial-to-mesenchymal transition (EMT). Acts by directly binding specific sequences in mRNAs. Binds the GU-rich sequence motifs in the ISE/ISS-3, a cis-element regulatory region present in the mRNA of FGFR2. Regulates splicing and expression of genes involved in inner ear development, auditory hair cell differentiation, and cell fate specification in the cochlear epithelium. This chain is Epithelial splicing regulatory protein 1 (Esrp1), found in Rattus norvegicus (Rat).